The chain runs to 147 residues: D-aminoacyl-tRNA deacylase (147 aa).

The Gly-cisPro motif, important for rejection of L-amino acids signature appears at 137-138; that stretch reads GP.

This sequence belongs to the DTD family. In terms of assembly, homodimer.

It is found in the cytoplasm. It carries out the reaction glycyl-tRNA(Ala) + H2O = tRNA(Ala) + glycine + H(+). The enzyme catalyses a D-aminoacyl-tRNA + H2O = a tRNA + a D-alpha-amino acid + H(+). In terms of biological role, an aminoacyl-tRNA editing enzyme that deacylates mischarged D-aminoacyl-tRNAs. Also deacylates mischarged glycyl-tRNA(Ala), protecting cells against glycine mischarging by AlaRS. Acts via tRNA-based rather than protein-based catalysis; rejects L-amino acids rather than detecting D-amino acids in the active site. By recycling D-aminoacyl-tRNA to D-amino acids and free tRNA molecules, this enzyme counteracts the toxicity associated with the formation of D-aminoacyl-tRNA entities in vivo and helps enforce protein L-homochirality. This is D-aminoacyl-tRNA deacylase from Acinetobacter baumannii (strain AYE).